A 439-amino-acid chain; its full sequence is sn-glycerol-3-phosphate-binding periplasmic protein UgpB (439 aa).

Positions 1-25 (MFNNAIRKTSICVALTLAFSANAMA) are cleaved as a signal peptide. Sn-glycerol 3-phosphate contacts are provided by Tyr67, Glu91, Ser146, Ser272, Gly309, Tyr348, and Arg399.

Belongs to the bacterial solute-binding protein 1 family. As to quaternary structure, the complex is composed of two ATP-binding proteins (UgpC), two transmembrane proteins (UgpA and UgpE) and a solute-binding protein (UgpB).

It localises to the periplasm. In terms of biological role, part of the ABC transporter complex UgpBAEC involved in sn-glycerol-3-phosphate (G3P) import. Binds G3P. This is sn-glycerol-3-phosphate-binding periplasmic protein UgpB (ugpB) from Yersinia enterocolitica serotype O:8 / biotype 1B (strain NCTC 13174 / 8081).